The primary structure comprises 133 residues: ATP synthase epsilon chain, chloroplastic (133 aa).

The protein belongs to the ATPase epsilon chain family. In terms of assembly, F-type ATPases have 2 components, CF(1) - the catalytic core - and CF(0) - the membrane proton channel. CF(1) has five subunits: alpha(3), beta(3), gamma(1), delta(1), epsilon(1). CF(0) has three main subunits: a, b and c.

The protein localises to the plastid. The protein resides in the chloroplast thylakoid membrane. Its function is as follows. Produces ATP from ADP in the presence of a proton gradient across the membrane. This is ATP synthase epsilon chain, chloroplastic from Helianthus annuus (Common sunflower).